A 343-amino-acid polypeptide reads, in one-letter code: Protein phosphatase 2C homolog 7, mitochondrial (343 aa).

Residues 1 to 39 (MFANVGFRTLRVSRGPLYGSCSQIISFSKRTFYSSAKSG) constitute a mitochondrion transit peptide. In terms of domain architecture, PPM-type phosphatase spans 76–342 (IYQKLKDSIR…DDITVVVVRV (267 aa)). Residues D109, G110, and D265 each contribute to the Mn(2+) site.

Requires Mg(2+) as cofactor. It depends on Mn(2+) as a cofactor.

The protein resides in the mitochondrion. It catalyses the reaction O-phospho-L-seryl-[protein] + H2O = L-seryl-[protein] + phosphate. The enzyme catalyses O-phospho-L-threonyl-[protein] + H2O = L-threonyl-[protein] + phosphate. Protein phosphatase which positively regulates biosynthesis of the ubiquinone, coenzyme Q. Dephosphorylates and activates the ubiquinone biosynthesis protein CAT5/COQ7. Also dephosphorylates CIT1 on 'Ser-462', which leads to its activation. This chain is Protein phosphatase 2C homolog 7, mitochondrial (PTC7), found in Saccharomyces cerevisiae (strain ATCC 204508 / S288c) (Baker's yeast).